The following is a 429-amino-acid chain: Adenylosuccinate synthetase (429 aa).

GTP-binding positions include Gly12–Lys18 and Gly40–Thr42. The active-site Proton acceptor is the Asp13. Residues Asp13 and Gly40 each contribute to the Mg(2+) site. IMP is bound by residues Asp13–Lys16, Asn38–His41, Thr128, Arg142, Gln223, Thr238, and Arg302. The Proton donor role is filled by His41. Thr298–Arg304 lines the substrate pocket. GTP is bound by residues Arg304, Ser330–Asp332, and Ser412–Gly414.

Belongs to the adenylosuccinate synthetase family. As to quaternary structure, homodimer. Requires Mg(2+) as cofactor.

It localises to the cytoplasm. It catalyses the reaction IMP + L-aspartate + GTP = N(6)-(1,2-dicarboxyethyl)-AMP + GDP + phosphate + 2 H(+). Its pathway is purine metabolism; AMP biosynthesis via de novo pathway; AMP from IMP: step 1/2. Plays an important role in the de novo pathway of purine nucleotide biosynthesis. Catalyzes the first committed step in the biosynthesis of AMP from IMP. The chain is Adenylosuccinate synthetase from Oceanobacillus iheyensis (strain DSM 14371 / CIP 107618 / JCM 11309 / KCTC 3954 / HTE831).